The primary structure comprises 166 residues: Ribosome maturation factor RimM (166 aa).

The 73-residue stretch at 92–164 folds into the PRC barrel domain; sequence EGVYYDFQLI…KIIIDPIPGL (73 aa).

This sequence belongs to the RimM family. Binds ribosomal protein uS19.

The protein resides in the cytoplasm. In terms of biological role, an accessory protein needed during the final step in the assembly of 30S ribosomal subunit, possibly for assembly of the head region. Essential for efficient processing of 16S rRNA. May be needed both before and after RbfA during the maturation of 16S rRNA. It has affinity for free ribosomal 30S subunits but not for 70S ribosomes. The polypeptide is Ribosome maturation factor RimM (Dehalococcoides mccartyi (strain CBDB1)).